The chain runs to 428 residues: Trigger factor (428 aa).

Positions 163 to 248 (GDIVDIDFEG…VNDVKVKELP (86 aa)) constitute a PPIase FKBP-type domain.

It belongs to the FKBP-type PPIase family. Tig subfamily.

It is found in the cytoplasm. The catalysed reaction is [protein]-peptidylproline (omega=180) = [protein]-peptidylproline (omega=0). Functionally, involved in protein export. Acts as a chaperone by maintaining the newly synthesized protein in an open conformation. Functions as a peptidyl-prolyl cis-trans isomerase. This is Trigger factor from Acetivibrio thermocellus (strain ATCC 27405 / DSM 1237 / JCM 9322 / NBRC 103400 / NCIMB 10682 / NRRL B-4536 / VPI 7372) (Clostridium thermocellum).